The sequence spans 107 residues: Glutaredoxin 4 (107 aa).

Residues 4-106 (IEKIERQIKD…KIISNAVLNS (103 aa)) enclose the Glutaredoxin domain. A glutathione-binding site is contributed by Lys-21. Cys-29 is a [2Fe-2S] cluster binding site. Glutathione-binding positions include Arg-58, Phe-70, and 83–84 (CS).

The protein belongs to the glutaredoxin family. Monothiol subfamily. In terms of assembly, homodimer.

The protein resides in the cytoplasm. Functionally, monothiol glutaredoxin involved in the biogenesis of iron-sulfur clusters. The polypeptide is Glutaredoxin 4 (grxD) (Buchnera aphidicola subsp. Schizaphis graminum (strain Sg)).